Consider the following 312-residue polypeptide: Ribosomal protein L11 methyltransferase (312 aa).

Positions 160, 181, 203, and 248 each coordinate S-adenosyl-L-methionine.

Belongs to the methyltransferase superfamily. PrmA family.

It is found in the cytoplasm. The enzyme catalyses L-lysyl-[protein] + 3 S-adenosyl-L-methionine = N(6),N(6),N(6)-trimethyl-L-lysyl-[protein] + 3 S-adenosyl-L-homocysteine + 3 H(+). In terms of biological role, methylates ribosomal protein L11. This Fusobacterium nucleatum subsp. nucleatum (strain ATCC 25586 / DSM 15643 / BCRC 10681 / CIP 101130 / JCM 8532 / KCTC 2640 / LMG 13131 / VPI 4355) protein is Ribosomal protein L11 methyltransferase.